Here is a 99-residue protein sequence, read N- to C-terminus: Large ribosomal subunit protein eL30 (99 aa).

The protein belongs to the eukaryotic ribosomal protein eL30 family. Part of the 50S ribosomal subunit.

The sequence is that of Large ribosomal subunit protein eL30 from Pyrococcus furiosus (strain ATCC 43587 / DSM 3638 / JCM 8422 / Vc1).